Here is a 225-residue protein sequence, read N- to C-terminus: Membrane protein LapB (225 aa).

To H.influenzae HI_1119.

It localises to the cell membrane. This chain is Membrane protein LapB (lapB), found in Mannheimia haemolytica (Pasteurella haemolytica).